Reading from the N-terminus, the 214-residue chain is MRVHHPYHEIPVETLNVDFFNLSPLSVARRLIGCAVVRVLAGERLSGRIVETEAYGGLRDPSCYVVRRDERIWSLLSGPPGVLYLHRAYRHWLLNITCDAVGEPACVLIRALEPTGGEERMRQLRRGARDLTNGPARLVEALAIDSAWEASALPRAEFWLEAGEPVPEEQVLNTVRIGLTRGKDLPWRFAVRDSPWVSRSVEAVLSEASLSAGL.

The protein belongs to the DNA glycosylase MPG family.

The chain is Putative 3-methyladenine DNA glycosylase from Gloeobacter violaceus (strain ATCC 29082 / PCC 7421).